We begin with the raw amino-acid sequence, 173 residues long: NADH-ubiquinone oxidoreductase chain 6 (173 aa).

5 consecutive transmembrane segments (helical) span residues 1–21 (MTYF…AVAS), 27–47 (YGVV…LSLG), 48–68 (ASFV…VVFV), 87–107 (VIGY…ISGF), and 139–159 (WGVG…FVVL).

The protein belongs to the complex I subunit 6 family.

It localises to the mitochondrion membrane. It carries out the reaction a ubiquinone + NADH + 5 H(+)(in) = a ubiquinol + NAD(+) + 4 H(+)(out). Core subunit of the mitochondrial membrane respiratory chain NADH dehydrogenase (Complex I) that is believed to belong to the minimal assembly required for catalysis. Complex I functions in the transfer of electrons from NADH to the respiratory chain. The immediate electron acceptor for the enzyme is believed to be ubiquinone. The protein is NADH-ubiquinone oxidoreductase chain 6 (MT-ND6) of Brachyramphus marmoratus (Marbled murrelet).